A 98-amino-acid polypeptide reads, in one-letter code: Small ribosomal subunit protein eS24 (98 aa).

This sequence belongs to the eukaryotic ribosomal protein eS24 family.

This Thermococcus gammatolerans (strain DSM 15229 / JCM 11827 / EJ3) protein is Small ribosomal subunit protein eS24.